A 349-amino-acid polypeptide reads, in one-letter code: Isopentenyl-diphosphate delta-isomerase (349 aa).

A substrate-binding site is contributed by 7-8 (RK). FMN contacts are provided by residues Ser65, 66–68 (SMT), Ser96, and Asn124. Substrate is bound at residue 96–98 (SQR). Gln159 contacts substrate. Glu160 contributes to the Mg(2+) binding site. FMN contacts are provided by residues Lys191, Thr221, 271–273 (GIR), and 292–293 (AA).

Belongs to the IPP isomerase type 2 family. In terms of assembly, homooctamer. Dimer of tetramers. The cofactor is FMN. NADPH serves as cofactor. It depends on Mg(2+) as a cofactor.

The protein localises to the cytoplasm. The enzyme catalyses isopentenyl diphosphate = dimethylallyl diphosphate. Functionally, involved in the biosynthesis of isoprenoids. Catalyzes the 1,3-allylic rearrangement of the homoallylic substrate isopentenyl (IPP) to its allylic isomer, dimethylallyl diphosphate (DMAPP). The sequence is that of Isopentenyl-diphosphate delta-isomerase from Synechocystis sp. (strain ATCC 27184 / PCC 6803 / Kazusa).